Consider the following 55-residue polypeptide: ATP synthase F(0) complex subunit 8 (55 aa).

Residues 4 to 24 (LNPAPWFTILVFSWMIFLAII) form a helical membrane-spanning segment. The span at 32–41 (TSPNDSSPLS) shows a compositional bias: polar residues. Residues 32–55 (TSPNDSSPLSTEKHKTESWDWPWQ) form a disordered region.

Belongs to the ATPase protein 8 family. As to quaternary structure, component of the ATP synthase complex composed at least of ATP5F1A/subunit alpha, ATP5F1B/subunit beta, ATP5MC1/subunit c (homooctomer), MT-ATP6/subunit a, MT-ATP8/subunit 8, ATP5ME/subunit e, ATP5MF/subunit f, ATP5MG/subunit g, ATP5MK/subunit k, ATP5MJ/subunit j, ATP5F1C/subunit gamma, ATP5F1D/subunit delta, ATP5F1E/subunit epsilon, ATP5PF/subunit F6, ATP5PB/subunit b, ATP5PD/subunit d, ATP5PO/subunit OSCP. ATP synthase complex consists of a soluble F(1) head domain (subunits alpha(3) and beta(3)) - the catalytic core - and a membrane F(0) domain - the membrane proton channel (subunits c, a, 8, e, f, g, k and j). These two domains are linked by a central stalk (subunits gamma, delta, and epsilon) rotating inside the F1 region and a stationary peripheral stalk (subunits F6, b, d, and OSCP).

The protein localises to the mitochondrion membrane. Functionally, subunit 8, of the mitochondrial membrane ATP synthase complex (F(1)F(0) ATP synthase or Complex V) that produces ATP from ADP in the presence of a proton gradient across the membrane which is generated by electron transport complexes of the respiratory chain. ATP synthase complex consist of a soluble F(1) head domain - the catalytic core - and a membrane F(1) domain - the membrane proton channel. These two domains are linked by a central stalk rotating inside the F(1) region and a stationary peripheral stalk. During catalysis, ATP synthesis in the catalytic domain of F(1) is coupled via a rotary mechanism of the central stalk subunits to proton translocation. In vivo, can only synthesize ATP although its ATP hydrolase activity can be activated artificially in vitro. Part of the complex F(0) domain. In Formosania lacustris (Oriental stream loach), this protein is ATP synthase F(0) complex subunit 8.